A 642-amino-acid polypeptide reads, in one-letter code: 1,4-alpha-glucan branching enzyme GlgB (642 aa).

D304 (nucleophile) is an active-site residue. The active-site Proton donor is the E355.

It belongs to the glycosyl hydrolase 13 family. GlgB subfamily. As to quaternary structure, monomer.

The catalysed reaction is Transfers a segment of a (1-&gt;4)-alpha-D-glucan chain to a primary hydroxy group in a similar glucan chain.. The protein operates within glycan biosynthesis; glycogen biosynthesis. Functionally, catalyzes the formation of the alpha-1,6-glucosidic linkages in glycogen by scission of a 1,4-alpha-linked oligosaccharide from growing alpha-1,4-glucan chains and the subsequent attachment of the oligosaccharide to the alpha-1,6 position. In Streptococcus pneumoniae serotype 4 (strain ATCC BAA-334 / TIGR4), this protein is 1,4-alpha-glucan branching enzyme GlgB.